Here is a 75-residue protein sequence, read N- to C-terminus: Kappa-scoloptoxin(03)-Ssm1d (75 aa).

The N-terminal stretch at 1–23 (MKLSMAILLVMALIIFTLDKNYS) is a signal peptide.

It belongs to the scoloptoxin-03 family. Post-translationally, contains 3 disulfide bonds. Expressed by the venom gland.

Its subcellular location is the secreted. In terms of biological role, inhibits voltage-gated potassium channels. This Scolopendra mutilans (Chinese red-headed centipede) protein is Kappa-scoloptoxin(03)-Ssm1d.